The primary structure comprises 404 residues: uncharacterized protein (404 aa).

Positions M1–G22 are enriched in polar residues. The interval M1–R110 is disordered. T47 is subject to Phosphothreonine. Positions S87 to P104 are enriched in polar residues. The PHD-type zinc finger occupies V117–K166.

This is an uncharacterized protein from Schizosaccharomyces pombe (strain 972 / ATCC 24843) (Fission yeast).